Consider the following 267-residue polypeptide: Type III pantothenate kinase (267 aa).

ATP is bound at residue 6 to 13 (DVRNTHTT). Substrate is bound at residue 109 to 112 (GADR). Catalysis depends on D111, which acts as the Proton acceptor. D131 is a K(+) binding site. Position 134 (S134) interacts with ATP. T186 contacts substrate.

It belongs to the type III pantothenate kinase family. Homodimer. NH4(+) is required as a cofactor. Requires K(+) as cofactor.

The protein resides in the cytoplasm. It carries out the reaction (R)-pantothenate + ATP = (R)-4'-phosphopantothenate + ADP + H(+). Its pathway is cofactor biosynthesis; coenzyme A biosynthesis; CoA from (R)-pantothenate: step 1/5. Catalyzes the phosphorylation of pantothenate (Pan), the first step in CoA biosynthesis. The chain is Type III pantothenate kinase from Mycobacterium sp. (strain JLS).